Here is a 188-residue protein sequence, read N- to C-terminus: Putative manganese efflux pump MntP (188 aa).

Helical transmembrane passes span 3–23 (LSATILLAFGMSMDAFAASIG), 41–61 (LIFGVIETLTPLVGWGLGMLA), 62–82 (SQFVLEWNHWIAFILLVFLGG), 107–129 (LLVTTAFATSLDAMAVGVGLAFL), 143–163 (ATFLMSTLGIMVGRFIGPLLG), and 168–188 (ILGGIVLIGIGSEILWSHFAG).

Belongs to the MntP (TC 9.B.29) family.

The protein resides in the cell inner membrane. In terms of biological role, probably functions as a manganese efflux pump. The polypeptide is Putative manganese efflux pump MntP (Klebsiella pneumoniae (strain 342)).